Here is a 232-residue protein sequence, read N- to C-terminus: Large ribosomal subunit protein uL1 (232 aa).

It belongs to the universal ribosomal protein uL1 family. As to quaternary structure, part of the 50S ribosomal subunit.

Its function is as follows. Binds directly to 23S rRNA. The L1 stalk is quite mobile in the ribosome, and is involved in E site tRNA release. Protein L1 is also a translational repressor protein, it controls the translation of the L11 operon by binding to its mRNA. This is Large ribosomal subunit protein uL1 from Hahella chejuensis (strain KCTC 2396).